The chain runs to 595 residues: Pectinesterase 5 (595 aa).

Residues 1–24 form the signal peptide; it reads MIGKVVVSVASILLIVGVAIGVVA. N-linked (GlcNAc...) asparagine glycans are attached at residues Asn-86 and Asn-206. The interval 215–239 is disordered; it reads SDKGAAPVNKGTPPVADDSPVADPD. Positions 227–239 are enriched in low complexity; it reads PPVADDSPVADPD. An RRLL cleavage motif motif is present at residues 243-246; it reads RRLL. An RKLM cleavage motif motif is present at residues 263-266; that stretch reads RKLM. An N-linked (GlcNAc...) asparagine glycan is attached at Asn-349. Substrate contacts are provided by Thr-360 and Gln-390. Catalysis depends on Asp-413, which acts as the Proton donor. The active-site Nucleophile is the Asp-434. Arg-503 and Trp-505 together coordinate substrate.

In the N-terminal section; belongs to the PMEI family. It in the C-terminal section; belongs to the pectinesterase family. As to quaternary structure, interacts with SBT6.1. In terms of tissue distribution, expressed in pollen grains and pollen tubes.

It localises to the cell membrane. The protein localises to the secreted. It is found in the cell wall. The protein resides in the golgi apparatus membrane. It carries out the reaction [(1-&gt;4)-alpha-D-galacturonosyl methyl ester](n) + n H2O = [(1-&gt;4)-alpha-D-galacturonosyl](n) + n methanol + n H(+). The protein operates within glycan metabolism; pectin degradation; 2-dehydro-3-deoxy-D-gluconate from pectin: step 1/5. Acts in the modification of cell walls via demethylesterification of cell wall pectin. Plays an important role in growth of pollen tubes in female floral tissues, possibly via enhancing the interaction between the pollen tube and female floral tissues by modification of the cell walls. May be regulated by MYB80 during anther development and play a role in tapetum and pollen development. This chain is Pectinesterase 5 (PME5), found in Arabidopsis thaliana (Mouse-ear cress).